The following is a 335-amino-acid chain: MLNVVIIGASGYAGAELALLVHKHPELNLKGLYVSAGSQDANKPFSALHPQCLGLVDLPVKPLDEAGMLEAKTGTDLVCLATAHEVSMNLAPQFLDAGIPVFDLSGAFRVQQDGFYDKYYGFTHDQPEWLAKAVYGLAEWNAEQIKKTDLVAVAGCYPTASLLALKPLMEAGLIKADTTPIINAVSGVSGAGRKAAIGTSFCEVSLNPYGVFNHRHQPEISYHLGGKVVFQPHLGNFVRGILATIYVQLADGVTAEQIDAAYQQAYSHSPIVRLSKQWPSIRSVAGTPFCDLHWQMQDGLLIVGSAIDNLLKGASSQALQCINLRFGFAPTTGLM.

The active site involves Cys156.

This sequence belongs to the NAGSA dehydrogenase family. Type 1 subfamily.

It localises to the cytoplasm. It carries out the reaction N-acetyl-L-glutamate 5-semialdehyde + phosphate + NADP(+) = N-acetyl-L-glutamyl 5-phosphate + NADPH + H(+). The protein operates within amino-acid biosynthesis; L-arginine biosynthesis; N(2)-acetyl-L-ornithine from L-glutamate: step 3/4. Functionally, catalyzes the NADPH-dependent reduction of N-acetyl-5-glutamyl phosphate to yield N-acetyl-L-glutamate 5-semialdehyde. This is N-acetyl-gamma-glutamyl-phosphate reductase from Tolumonas auensis (strain DSM 9187 / NBRC 110442 / TA 4).